The sequence spans 158 residues: Osmosensory protein A (158 aa).

A Phosphothreonine; by PknD modification is found at Thr-2. One can recognise an STAS domain in the interval 28–139 (AQIRAYLHHL…RSVHKALHDL (112 aa)).

The protein belongs to the anti-sigma-factor antagonist family. As to quaternary structure, interacts with Rv2638. Phosphorylation abolishes binding to Rv2638. Post-translationally, phosphorylated on Thr-2 by the serine/threonine-protein kinase PknD. Also phosphorylated to a lesser extent by PknB and PknE. Dephosphorylated by PstP.

Regulated by PknD under osmotic stress. Part of a signaling pathway that enables adaptation to osmotic stress through cell wall remodeling and virulence factor production. Unphosphorylated OprA forms a complex with the anti-anti-sigma-factor paralog Rv2638 that dissociates on OprA phosphorylation by PknD. Phosphorylation of OprA may stimulate the release of SigF from an inhibitory complex and enable the transcription of osmotically regulated genes, such as oprA and the ESX-1-associated virulence factor espA. This chain is Osmosensory protein A, found in Mycobacterium tuberculosis (strain ATCC 25618 / H37Rv).